The primary structure comprises 360 residues: tRNA N6-adenosine threonylcarbamoyltransferase (360 aa).

Positions 115 and 119 each coordinate Fe cation. Residues 137–141 (LVSGG), Asp170, Gly183, and Asn283 contribute to the substrate site. Asp311 contributes to the Fe cation binding site.

It belongs to the KAE1 / TsaD family. Fe(2+) serves as cofactor.

Its subcellular location is the cytoplasm. The catalysed reaction is L-threonylcarbamoyladenylate + adenosine(37) in tRNA = N(6)-L-threonylcarbamoyladenosine(37) in tRNA + AMP + H(+). In terms of biological role, required for the formation of a threonylcarbamoyl group on adenosine at position 37 (t(6)A37) in tRNAs that read codons beginning with adenine. Is involved in the transfer of the threonylcarbamoyl moiety of threonylcarbamoyl-AMP (TC-AMP) to the N6 group of A37, together with TsaE and TsaB. TsaD likely plays a direct catalytic role in this reaction. The chain is tRNA N6-adenosine threonylcarbamoyltransferase from Sinorhizobium medicae (strain WSM419) (Ensifer medicae).